The primary structure comprises 261 residues: Glucose 1-dehydrogenase 3 (261 aa).

Valine 11–valine 35 contributes to the NAD(+) binding site. Residue serine 145 participates in substrate binding. Tyrosine 158 serves as the catalytic Proton acceptor.

This sequence belongs to the short-chain dehydrogenases/reductases (SDR) family. Homotetramer.

It catalyses the reaction D-glucose + NAD(+) = D-glucono-1,5-lactone + NADH + H(+). It carries out the reaction D-glucose + NADP(+) = D-glucono-1,5-lactone + NADPH + H(+). The chain is Glucose 1-dehydrogenase 3 (gdhIII) from Priestia megaterium (Bacillus megaterium).